Reading from the N-terminus, the 411-residue chain is Citrate synthase (411 aa).

Residues His304 and Asp363 contribute to the active site.

It belongs to the citrate synthase family.

The catalysed reaction is oxaloacetate + acetyl-CoA + H2O = citrate + CoA + H(+). It functions in the pathway carbohydrate metabolism; tricarboxylic acid cycle; isocitrate from oxaloacetate: step 1/2. The sequence is that of Citrate synthase (gltA) from Rickettsia akari.